The following is a 306-amino-acid chain: Recombination-associated protein RdgC (306 aa).

The protein belongs to the RdgC family.

It localises to the cytoplasm. Its subcellular location is the nucleoid. In terms of biological role, may be involved in recombination. The sequence is that of Recombination-associated protein RdgC from Burkholderia ambifaria (strain MC40-6).